Consider the following 598-residue polypeptide: Pescadillo homolog (598 aa).

Residues 296–317 (QAMKADSKDKDDNSNDEAPENV) form a disordered region. Residues 345-439 (PTATLFEDFV…ELLSANLYLP (95 aa)) form the BRCT domain. Disordered stretches follow at residues 452-501 (DALG…EDVE), 515-544 (GIAY…EDEE), and 564-598 (MKYS…VEKK). The segment covering 463–485 (ESEDESSDSSEESDSEIENEEED) has biased composition (acidic residues). Basic and acidic residues-rich tracts occupy residues 520–532 (KAKD…DVAS), 570–579 (QKEDKIEELK), and 586–598 (AKKE…VEKK). Residues 557 to 598 (QRKLYKKMKYSNQQKEDKIEELKKKKKQLAKKEKTLKKVEKK) adopt a coiled-coil conformation.

It belongs to the pescadillo family. As to quaternary structure, component of the NOP7 complex, composed of ERB1, NOP7 and YTM1. The complex is held together by ERB1, which interacts with NOP7 via its N-terminal domain and with YTM1 via a high-affinity interaction between the seven-bladed beta-propeller domains of the 2 proteins. The NOP7 complex associates with the 66S pre-ribosome.

The protein resides in the nucleus. The protein localises to the nucleolus. Its subcellular location is the nucleoplasm. In terms of biological role, component of the NOP7 complex, which is required for maturation of the 25S and 5.8S ribosomal RNAs and formation of the 60S ribosome. The polypeptide is Pescadillo homolog (Candida glabrata (strain ATCC 2001 / BCRC 20586 / JCM 3761 / NBRC 0622 / NRRL Y-65 / CBS 138) (Yeast)).